Consider the following 84-residue polypeptide: U1-theraphotoxin-Hs1a (84 aa).

Positions 1 to 22 are cleaved as a signal peptide; that stretch reads MKVTLIAILTCAAVLVLHTTAA. The propeptide occupies 23-48; that stretch reads EELEESQLMEVGMPDTELAAVDEERL. Intrachain disulfides connect cysteine 51–cysteine 65, cysteine 55–cysteine 76, and cysteine 70–cysteine 81.

Belongs to the neurotoxin 12 (Hwtx-2) family. 02 (Hwtx-2) subfamily. Expressed by the venom gland.

The protein resides in the secreted. In terms of biological role, blocks neuromuscular transmission. Acts cooperatively to potentiate the activity of huwentoxin-I. Paralyzes locusts and kills mice following intracerebroventricular injection. The polypeptide is U1-theraphotoxin-Hs1a (Cyriopagopus schmidti (Chinese bird spider)).